The following is a 1054-amino-acid chain: DNA-directed RNA polymerase subunit beta' (1054 aa).

Residues Asp383, Asp385, and Asp387 each coordinate Mg(2+). Zn(2+) contacts are provided by Cys752, Cys826, Cys833, and Cys836.

Belongs to the RNA polymerase beta' chain family. In terms of assembly, the RNAP catalytic core consists of 2 alpha, 1 beta, 1 beta' and 1 omega subunit. When a sigma factor is associated with the core the holoenzyme is formed, which can initiate transcription. Mg(2+) is required as a cofactor. The cofactor is Zn(2+).

It carries out the reaction RNA(n) + a ribonucleoside 5'-triphosphate = RNA(n+1) + diphosphate. Functionally, DNA-dependent RNA polymerase catalyzes the transcription of DNA into RNA using the four ribonucleoside triphosphates as substrates. This is DNA-directed RNA polymerase subunit beta' from Weissella paramesenteroides (Leuconostoc paramesenteroides).